A 63-amino-acid chain; its full sequence is Male-specific sperm protein Mst84Da (63 aa).

The protein belongs to the MST(3)CGP family. As to expression, testis.

This Drosophila melanogaster (Fruit fly) protein is Male-specific sperm protein Mst84Da (Mst84Da).